The chain runs to 153 residues: Histone H2A (153 aa).

2 disordered regions span residues 1-27 (MDTG…VSRS) and 131-153 (KAAA…PKKA). Residues 132-147 (AAAAATKEPKSPAKAT) show a composition bias toward low complexity. The SPKK motif motif lies at 149–152 (SPKK).

Belongs to the histone H2A family. In terms of assembly, the nucleosome is a histone octamer containing two molecules each of H2A, H2B, H3 and H4 assembled in one H3-H4 heterotetramer and two H2A-H2B heterodimers. The octamer wraps approximately 147 bp of DNA.

Its subcellular location is the nucleus. It localises to the chromosome. In terms of biological role, core component of nucleosome. Nucleosomes wrap and compact DNA into chromatin, limiting DNA accessibility to the cellular machineries which require DNA as a template. Histones thereby play a central role in transcription regulation, DNA repair, DNA replication and chromosomal stability. DNA accessibility is regulated via a complex set of post-translational modifications of histones, also called histone code, and nucleosome remodeling. The polypeptide is Histone H2A (Euphorbia esula (Leafy spurge)).